The sequence spans 1342 residues: DNA-directed RNA polymerase subunit beta (1342 aa).

This sequence belongs to the RNA polymerase beta chain family. The RNAP catalytic core consists of 2 alpha, 1 beta, 1 beta' and 1 omega subunit. When a sigma factor is associated with the core the holoenzyme is formed, which can initiate transcription.

The catalysed reaction is RNA(n) + a ribonucleoside 5'-triphosphate = RNA(n+1) + diphosphate. Functionally, DNA-dependent RNA polymerase catalyzes the transcription of DNA into RNA using the four ribonucleoside triphosphates as substrates. This is DNA-directed RNA polymerase subunit beta from Mannheimia succiniciproducens (strain KCTC 0769BP / MBEL55E).